A 231-amino-acid polypeptide reads, in one-letter code: Large ribosomal subunit protein uL1 (231 aa).

The protein belongs to the universal ribosomal protein uL1 family. Part of the 50S ribosomal subunit.

Functionally, binds directly to 23S rRNA. The L1 stalk is quite mobile in the ribosome, and is involved in E site tRNA release. In terms of biological role, protein L1 is also a translational repressor protein, it controls the translation of the L11 operon by binding to its mRNA. This chain is Large ribosomal subunit protein uL1, found in Alcanivorax borkumensis (strain ATCC 700651 / DSM 11573 / NCIMB 13689 / SK2).